The sequence spans 129 residues: Small ribosomal subunit protein uS11 (129 aa).

Belongs to the universal ribosomal protein uS11 family. Part of the 30S ribosomal subunit.

In terms of biological role, located on the platform of the 30S subunit. This chain is Small ribosomal subunit protein uS11, found in Methanocaldococcus jannaschii (strain ATCC 43067 / DSM 2661 / JAL-1 / JCM 10045 / NBRC 100440) (Methanococcus jannaschii).